The following is a 239-amino-acid chain: Endoglucanase A (239 aa).

The N-terminal stretch at 1 to 16 is a signal peptide; it reads MKLSMTLSLFAATAMG.

It belongs to the glycosyl hydrolase 12 (cellulase H) family.

The enzyme catalyses Endohydrolysis of (1-&gt;4)-beta-D-glucosidic linkages in cellulose, lichenin and cereal beta-D-glucans.. Has carboxylmethylcellulase activity. The sequence is that of Endoglucanase A (cekA) from Aspergillus kawachii (strain NBRC 4308) (White koji mold).